The chain runs to 381 residues: Sulfate/thiosulfate import ATP-binding protein CysA (381 aa).

Residues 3–233 (ILVYEVSKSL…PIDYFVGIFS (231 aa)) enclose the ABC transporter domain. Residue 35-42 (GPSGSGKS) participates in ATP binding.

This sequence belongs to the ABC transporter superfamily. Sulfate/tungstate importer (TC 3.A.1.6) family.

It is found in the plastid. It localises to the chloroplast. It carries out the reaction sulfate(out) + ATP + H2O = sulfate(in) + ADP + phosphate + H(+). It catalyses the reaction thiosulfate(out) + ATP + H2O = thiosulfate(in) + ADP + phosphate + H(+). Functionally, part of the ABC transporter complex involved in sulfate/thiosulfate import. Responsible for energy coupling to the transport system. The sequence is that of Sulfate/thiosulfate import ATP-binding protein CysA from Anthoceros angustus (Hornwort).